Reading from the N-terminus, the 188-residue chain is Large ribosomal subunit protein uL5 (188 aa).

This sequence belongs to the universal ribosomal protein uL5 family. Part of the 50S ribosomal subunit; part of the 5S rRNA/L5/L18/L25 subcomplex. Contacts the 5S rRNA and the P site tRNA. Forms a bridge to the 30S subunit in the 70S ribosome.

In terms of biological role, this is one of the proteins that bind and probably mediate the attachment of the 5S RNA into the large ribosomal subunit, where it forms part of the central protuberance. In the 70S ribosome it contacts protein S13 of the 30S subunit (bridge B1b), connecting the 2 subunits; this bridge is implicated in subunit movement. Contacts the P site tRNA; the 5S rRNA and some of its associated proteins might help stabilize positioning of ribosome-bound tRNAs. This Aquifex aeolicus (strain VF5) protein is Large ribosomal subunit protein uL5.